The following is a 61-amino-acid chain: Small ribosomal subunit protein uS14 (61 aa).

Zn(2+)-binding residues include Cys-24, Cys-27, Cys-40, and Cys-43.

The protein belongs to the universal ribosomal protein uS14 family. Zinc-binding uS14 subfamily. Part of the 30S ribosomal subunit. Contacts proteins S3 and S10. Requires Zn(2+) as cofactor.

Binds 16S rRNA, required for the assembly of 30S particles and may also be responsible for determining the conformation of the 16S rRNA at the A site. This is Small ribosomal subunit protein uS14 from Clostridium beijerinckii (strain ATCC 51743 / NCIMB 8052) (Clostridium acetobutylicum).